A 35-amino-acid polypeptide reads, in one-letter code: Conotoxin Cl6.16 (35 aa).

3 disulfide bridges follow: C10–C22, C16–C27, and C21–C34.

Expressed by the venom duct.

The protein resides in the secreted. The polypeptide is Conotoxin Cl6.16 (Californiconus californicus (California cone)).